The following is a 493-amino-acid chain: Putative MgpC-like protein MPN_414 (493 aa).

A compositionally biased stretch (polar residues) spans 1 to 14 (MKPTSLPKNFTNNP). Disordered stretches follow at residues 1–92 (MKPT…GHNS) and 441–493 (KSAR…SGNH). Basic and acidic residues-rich tracts occupy residues 25–34 (DNGRAYRKLN) and 44–56 (DSTK…DKDG). Polar residues-rich tracts occupy residues 72-92 (VSST…GHNS) and 445-472 (ENAQ…SPCR). Residues 482-493 (RVTEEERSSGNH) are compositionally biased toward basic and acidic residues.

Belongs to the MgpC family.

This Mycoplasma pneumoniae (strain ATCC 29342 / M129 / Subtype 1) (Mycoplasmoides pneumoniae) protein is Putative MgpC-like protein MPN_414.